Here is a 330-residue protein sequence, read N- to C-terminus: 1-aminocyclopropane-1-carboxylate oxidase 2 (330 aa).

A Fe2OG dioxygenase domain is found at Pro153–Pro253. Fe cation contacts are provided by His177, Asp179, and His234.

Belongs to the iron/ascorbate-dependent oxidoreductase family. Monomer. It depends on Fe cation as a cofactor.

It catalyses the reaction 1-aminocyclopropane-1-carboxylate + L-ascorbate + O2 = ethene + L-dehydroascorbate + hydrogen cyanide + CO2 + 2 H2O. The protein operates within alkene biosynthesis; ethylene biosynthesis via S-adenosyl-L-methionine; ethylene from S-adenosyl-L-methionine: step 2/2. The chain is 1-aminocyclopropane-1-carboxylate oxidase 2 (ACO2) from Malus domestica (Apple).